A 311-amino-acid polypeptide reads, in one-letter code: Putative dihydroorotate dehydrogenase A (fumarate) (311 aa).

Substrate-binding positions include Lys-45, 69–73 (NSMGL), and Asn-128. Residue 45–46 (KT) participates in FMN binding. FMN is bound at residue Asn-128. Cys-131 functions as the Nucleophile in the catalytic mechanism. 2 residues coordinate FMN: Lys-165 and Val-193. Residue 194–195 (NS) participates in substrate binding. Residues Gly-220, 248–249 (GG), and 270–271 (GT) each bind FMN.

Belongs to the dihydroorotate dehydrogenase family. Type 1 subfamily. In terms of assembly, homodimer. It depends on FMN as a cofactor.

The protein localises to the cytoplasm. It catalyses the reaction (S)-dihydroorotate + fumarate = orotate + succinate. The protein operates within pyrimidine metabolism; UMP biosynthesis via de novo pathway. Functionally, catalyzes the conversion of dihydroorotate to orotate with fumarate as the electron acceptor. The polypeptide is Putative dihydroorotate dehydrogenase A (fumarate) (pyrD) (Streptococcus pyogenes serotype M5 (strain Manfredo)).